Reading from the N-terminus, the 61-residue chain is Small ribosomal subunit protein uS14 (61 aa).

Zn(2+) contacts are provided by cysteine 24, cysteine 27, cysteine 40, and cysteine 43.

This sequence belongs to the universal ribosomal protein uS14 family. Zinc-binding uS14 subfamily. Part of the 30S ribosomal subunit. Contacts proteins S3 and S10. The cofactor is Zn(2+).

In terms of biological role, binds 16S rRNA, required for the assembly of 30S particles and may also be responsible for determining the conformation of the 16S rRNA at the A site. The chain is Small ribosomal subunit protein uS14 from Aliarcobacter butzleri (strain RM4018) (Arcobacter butzleri).